Here is a 258-residue protein sequence, read N- to C-terminus: Leucyl/phenylalanyl-tRNA--protein transferase (258 aa).

It belongs to the L/F-transferase family.

The protein resides in the cytoplasm. The enzyme catalyses N-terminal L-lysyl-[protein] + L-leucyl-tRNA(Leu) = N-terminal L-leucyl-L-lysyl-[protein] + tRNA(Leu) + H(+). The catalysed reaction is N-terminal L-arginyl-[protein] + L-leucyl-tRNA(Leu) = N-terminal L-leucyl-L-arginyl-[protein] + tRNA(Leu) + H(+). It catalyses the reaction L-phenylalanyl-tRNA(Phe) + an N-terminal L-alpha-aminoacyl-[protein] = an N-terminal L-phenylalanyl-L-alpha-aminoacyl-[protein] + tRNA(Phe). Its function is as follows. Functions in the N-end rule pathway of protein degradation where it conjugates Leu, Phe and, less efficiently, Met from aminoacyl-tRNAs to the N-termini of proteins containing an N-terminal arginine or lysine. The polypeptide is Leucyl/phenylalanyl-tRNA--protein transferase (Alkalilimnicola ehrlichii (strain ATCC BAA-1101 / DSM 17681 / MLHE-1)).